The following is a 371-amino-acid chain: tRNA-specific 2-thiouridylase MnmA (371 aa).

ATP is bound by residues 12–19 and methionine 38; that span reads GMSGGVDS. Residues 98–100 are interaction with target base in tRNA; that stretch reads NPD. The active-site Nucleophile is the cysteine 103. The cysteines at positions 103 and 200 are disulfide-linked. Glycine 128 contributes to the ATP binding site. An interaction with tRNA region spans residues 150 to 152; sequence KDQ. Cysteine 200 acts as the Cysteine persulfide intermediate in catalysis. The tract at residues 312–313 is interaction with tRNA; sequence RY.

Belongs to the MnmA/TRMU family. Interacts with TusE.

It is found in the cytoplasm. It carries out the reaction S-sulfanyl-L-cysteinyl-[protein] + uridine(34) in tRNA + AH2 + ATP = 2-thiouridine(34) in tRNA + L-cysteinyl-[protein] + A + AMP + diphosphate + H(+). Catalyzes the 2-thiolation of uridine at the wobble position (U34) of tRNA(Lys), tRNA(Glu) and tRNA(Gln), leading to the formation of s(2)U34, the first step of tRNA-mnm(5)s(2)U34 synthesis. Sulfur is provided by IscS, via a sulfur-relay system. Binds ATP and its substrate tRNAs. This chain is tRNA-specific 2-thiouridylase MnmA, found in Yersinia pestis bv. Antiqua (strain Antiqua).